The sequence spans 628 residues: E3 SUMO-protein ligase PIAS3 (628 aa).

Residues 1–200 are interaction with CCAR2; the sequence is MAELGELKHM…QLRFCLCETS (200 aa). The region spanning 11-45 is the SAP domain; that stretch reads VMSFRVSELQVLLGFAGRNKSGRKHELLAKALHLL. Positions 19–23 match the LXXLL motif motif; it reads LQVLL. Residues lysine 46, lysine 56, lysine 230, and lysine 307 each participate in a glycyl lysine isopeptide (Lys-Gly) (interchain with G-Cter in SUMO2) cross-link. Residues 115–280 form the PINIT domain; sequence MHPPLPQPVH…SLSVYLVRQL (166 aa). The segment at 312-393 adopts an SP-RING-type zinc-finger fold; sequence PDSEVATTSL…FMEILNSCSD (82 aa). Zn(2+) contacts are provided by cysteine 343, histidine 345, cysteine 366, and cysteine 369. An SUMO1-binding region spans residues 450-460; that stretch reads LTIESSSDEED. Residues lysine 466 and lysine 482 each participate in a glycyl lysine isopeptide (Lys-Gly) (interchain with G-Cter in SUMO2) cross-link. The segment at 571–628 is disordered; the sequence is GPLAPTLGSSHRSSTPAPPPGRVSSIVAPGSSLREGHGGPLPSGPSLTGCRSDVISLD.

This sequence belongs to the PIAS family. In terms of assembly, monomer. Interacts with PLAG1 and ZFHX3. Interacts with STAT5A; the interaction occurs on stimulation by PRL. Binds SUMO1 and UBE2I. Interacts with AR, BCL11A, HMGA2, IRF1 and NCOA2. Interacts with MITF; the interaction inhibits the transcriptional activity of MITF. Interacts with STAT3; the interaction occurs on stimulation by IL6, CNTF or OSM and inhibits the DNA binding activity of STAT3. Interacts with GFI1; the interaction relieves the inhibitory effect of PIAS3 on STAT3-mediated transcriptional activity. Interacts with MTA1. Interacts with CCAR2 (via N-terminus). Interacts with TRIM8. Interacts with PRDM1. In terms of processing, sumoylated. As to expression, expressed in kidney, heart, spleen, brain and cerebellum; weak expression, if any, in liver and lung.

It localises to the cytoplasm. The protein localises to the nucleus. It is found in the nucleus speckle. It functions in the pathway protein modification; protein sumoylation. In terms of biological role, functions as an E3-type small ubiquitin-like modifier (SUMO) ligase, stabilizing the interaction between UBE2I and the substrate, and as a SUMO-tethering factor. Plays a crucial role as a transcriptional coregulation in various cellular pathways, including the STAT pathway and the steroid hormone signaling pathway. Repressor of STAT3 signaling via inhibiting STAT3 DNA-binding and suppressing cell growth. Repressor of MITF transcriptional activity. Enhances the sumoylation of MTA1 and may participate in its paralog-selective sumoylation. Sumoylates CCAR2 which promotes its interaction with SIRT1. Diminishes the sumoylation of ZFHX3 by preventing the colocalization of ZFHX3 with SUMO1 in the nucleus. The protein is E3 SUMO-protein ligase PIAS3 (Pias3) of Mus musculus (Mouse).